The primary structure comprises 213 residues: Large ribosomal subunit protein uL3 (213 aa).

Positions Lys-130–Arg-161 are disordered.

This sequence belongs to the universal ribosomal protein uL3 family. In terms of assembly, part of the 50S ribosomal subunit. Forms a cluster with proteins L14 and L19.

Functionally, one of the primary rRNA binding proteins, it binds directly near the 3'-end of the 23S rRNA, where it nucleates assembly of the 50S subunit. The protein is Large ribosomal subunit protein uL3 of Picosynechococcus sp. (strain ATCC 27264 / PCC 7002 / PR-6) (Agmenellum quadruplicatum).